A 78-amino-acid polypeptide reads, in one-letter code: uncharacterized protein (78 aa).

This is an uncharacterized protein from Saccharomyces cerevisiae (strain ATCC 204508 / S288c) (Baker's yeast).